The sequence spans 258 residues: Ciliogenesis and planar polarity effector 2 (258 aa).

Residues Ser-50–Glu-258 are small GTPase-like. Positions 64, 65, 67, 68, 69, 70, 82, 84, 87, 176, 178, and 206 each coordinate GTP.

It belongs to the small GTPase superfamily. Rab family. In terms of assembly, interacts with FUZ. Associates with the CPLANE (ciliogenesis and planar polarity effectors) complex via its interaction with FUZ.

It is found in the cytoplasm. The protein localises to the cytoskeleton. It localises to the cilium basal body. Its subcellular location is the microtubule organizing center. The protein resides in the centrosome. It is found in the centriole. In terms of biological role, required for efficient primary cilia initiation, regulating a late step in cilia initiation. Plays a role in the final maturation of the mother centriole and ciliary vesicle that allows extension of the ciliary axoneme. The protein is Ciliogenesis and planar polarity effector 2 of Homo sapiens (Human).